The following is a 250-amino-acid chain: 3-deoxy-manno-octulosonate cytidylyltransferase (250 aa).

This sequence belongs to the KdsB family.

It is found in the cytoplasm. It carries out the reaction 3-deoxy-alpha-D-manno-oct-2-ulosonate + CTP = CMP-3-deoxy-beta-D-manno-octulosonate + diphosphate. It functions in the pathway nucleotide-sugar biosynthesis; CMP-3-deoxy-D-manno-octulosonate biosynthesis; CMP-3-deoxy-D-manno-octulosonate from 3-deoxy-D-manno-octulosonate and CTP: step 1/1. The protein operates within bacterial outer membrane biogenesis; lipopolysaccharide biosynthesis. Functionally, activates KDO (a required 8-carbon sugar) for incorporation into bacterial lipopolysaccharide in Gram-negative bacteria. This is 3-deoxy-manno-octulosonate cytidylyltransferase from Francisella philomiragia subsp. philomiragia (strain ATCC 25017 / CCUG 19701 / FSC 153 / O#319-036).